We begin with the raw amino-acid sequence, 90 residues long: Photosystem I reaction center subunit PsaK 2 (90 aa).

A run of 2 helical transmembrane segments spans residues 20-42 (LSVGIIMCLCNVFAFVIGYFAIQ) and 67-89 (LATMSFGHILGAGMVLGLASSGI).

It belongs to the PsaG/PsaK family.

The protein localises to the cellular thylakoid membrane. The polypeptide is Photosystem I reaction center subunit PsaK 2 (psaK2) (Synechocystis sp. (strain ATCC 27184 / PCC 6803 / Kazusa)).